The primary structure comprises 841 residues: Beta-adaptin-like protein A (841 aa).

2 disordered regions span residues 1–25 (MAPP…VSDL) and 650–671 (DENK…LESS). 2 stretches are compositionally biased toward polar residues: residues 9–25 (RYPS…VSDL) and 654–671 (GVSN…LESS).

Belongs to the adaptor complexes large subunit family. As to quaternary structure, adaptor protein complexes are heterotetramers composed of two large adaptins (beta-type subunit and alpha-type or delta-type or epsilon-type or gamma-type subunit), a medium adaptin (mu-type subunit) and a small adaptin (sigma-type subunit). Interacts with AHK2.

The protein resides in the golgi apparatus. It localises to the trans-Golgi network. It is found in the cytoplasmic vesicle. Its subcellular location is the clathrin-coated vesicle membrane. Subunit of clathrin-associated adaptor protein complex that plays a role in protein sorting in the late-Golgi/trans-Golgi network (TGN) and/or endosomes. The AP complexes mediate both the recruitment of clathrin to membranes and the recognition of sorting signals within the cytosolic tails of transmembrane cargo molecules. The polypeptide is Beta-adaptin-like protein A (BETAA-AD) (Arabidopsis thaliana (Mouse-ear cress)).